A 693-amino-acid polypeptide reads, in one-letter code: Bacterial dynamin-like protein (693 aa).

Residues 1–521 (MVNQVATDRF…DNSPGWAKWA (521 aa)) are Cytoplasmic-facing. Residues 66 to 313 (QQGVFRLLVL…QADLDGTGFP (248 aa)) form the Dynamin-type G domain. A G1 motif region spans residues 76–83 (GDMKRGKS). 79–84 (KRGKST) contributes to the GTP binding site. Positions 102 to 103 (CT) are G2 motif. The G3 motif stretch occupies residues 180 to 183 (DSPG). 235–241 (FLVNAWD) contributes to the GTP binding site. Positions 238–241 (NAWD) are G4 motif. Residue Asn268 is a region of interest, G5 motif. 292–293 (SI) lines the GTP pocket. Positions 311 to 571 (GFPKFMDSLN…TAVTGILLGP (261 aa)) are middle domain. Positions 347–378 (REAVARRIPLLEQDVNELKKRIDSVEPEFNKL) form a coiled coil. An intramembrane segment occupies 522–574 (MGLLSLSKGNLAGFALAGAGFDWKNILLNYFTVIGIGGIITAVTGILLGPIGF). The tract at residues 572–606 (IGFALLGLGVGFLQADQARRELVKTAKKELVKHLP) is paddle domain. Residues 575–693 (ALLGLGVGFL…AYSNLLAYYS (119 aa)) lie on the Cytoplasmic side of the membrane. A GED region spans residues 607–693 (QVAHEQSQVV…AYSNLLAYYS (87 aa)). Positions 661–688 (ESEFNRLKNLQEDVIAQLQKIEAAYSNL) form a coiled coil.

It belongs to the TRAFAC class dynamin-like GTPase superfamily. Dynamin/Fzo/YdjA family. Mitofusin subfamily. In terms of assembly, homodimer. Self-assembles in the presence of GMP-PNP and liposomes, and probably also in the presence of GTP.

It is found in the cell inner membrane. The catalysed reaction is GTP + H2O = GDP + phosphate + H(+). In terms of biological role, dynamin-related GTPase probably involved in membrane remodeling. Lipid and nucleotide-binding are thought to induce a large intramolecular rearrangement, leading to assembly on lipid bilayers and possible membrane curving. In the presence of the non-hydrolyzable GTP analog GMP-PNP self-assembles on a lipid bilayer; this does not stimulate subsequent GTPase activity. Does not bind lipids in the presence of GDP; perhaps GTP hydrolysis disrupts membrane-binding. This Nostoc punctiforme (strain ATCC 29133 / PCC 73102) protein is Bacterial dynamin-like protein.